Here is a 147-residue protein sequence, read N- to C-terminus: Small ribosomal subunit protein bS16 (147 aa).

Residues 89-147 are disordered; it reads AWTHGNNPKKAEPGKKAQERAKERADKAEAKAAAAAEAAAAPAEEAPAEAAPAEETSES. Positions 97–118 are enriched in basic and acidic residues; it reads KKAEPGKKAQERAKERADKAEA. The segment covering 119 to 147 has biased composition (low complexity); sequence KAAAAAEAAAAPAEEAPAEAAPAEETSES.

This sequence belongs to the bacterial ribosomal protein bS16 family.

In Hyphomonas neptunium (strain ATCC 15444), this protein is Small ribosomal subunit protein bS16.